The following is a 236-amino-acid chain: 3-oxoacyl-[acyl-carrier-protein] reductase (236 aa).

Residue Met1 is modified to N-acetylmethionine. NADP(+) contacts are provided by residues 11 to 14 and 34 to 35; these read SRGI and RN. Lys40 bears the N6-acetyllysine mark. NADP(+) contacts are provided by residues Asp56 and 83–85; that span reads AAG. Lys96 bears the N6-acetyllysine mark. Position 134 (Ser134) interacts with substrate. Residues Tyr147, Lys151, and 180-182 contribute to the NADP(+) site; that span reads IRT. The Proton acceptor role is filled by Tyr147. Lys194 bears the N6-acetyllysine mark.

Belongs to the short-chain dehydrogenases/reductases (SDR) family. In terms of assembly, homotetramer (in vitro). Heterotetramer with HSD17B8; contains two molecules each of HSD17B8 and CBR4. Does not form homotetramers when HSD17B8 is coexpressed, only heterotetramers (in vitro).

It is found in the mitochondrion matrix. It catalyses the reaction a (3R)-hydroxyacyl-[ACP] + NADP(+) = a 3-oxoacyl-[ACP] + NADPH + H(+). The catalysed reaction is a quinone + NADPH + H(+) = a quinol + NADP(+). The protein operates within lipid metabolism; fatty acid biosynthesis. Functionally, component of the heterotetramer complex KAR (3-ketoacyl-[acyl carrier protein] reductase or 3-ketoacyl-[ACP] reductase) that forms part of the mitochondrial fatty acid synthase (mtFAS). Beta-subunit of the KAR heterotetramer complex, responsible for the 3-ketoacyl-ACP reductase activity of the mtFAS, reduces 3-oxoacyl-[ACP] to (3R)-hydroxyacyl-[ACP] in a NADPH-dependent manner with no chain length preference, thereby participating in mitochondrial fatty acid biosynthesis. The homotetramer has NADPH-dependent quinone reductase activity (in vitro), hence could play a role in protection against cytotoxicity of exogenous quinones. As a heterotetramer, it can also reduce 9,10-phenanthrenequinone, 1,4-benzoquinone and various other o-quinones and p-quinones (in vitro). The protein is 3-oxoacyl-[acyl-carrier-protein] reductase (Cbr4) of Mus musculus (Mouse).